The sequence spans 500 residues: DNA double-strand break repair helicase HerA (500 aa).

ATP contacts are provided by residues R142, 151–156 (GSGKSN), and 459–460 (KI).

It belongs to the HerA family. In terms of assembly, homohexamer. Forms a complex with NurA.

The catalysed reaction is Couples ATP hydrolysis with the unwinding of duplex DNA at the replication fork by translocating in the 5'-3' direction. This creates two antiparallel DNA single strands (ssDNA). The leading ssDNA polymer is the template for DNA polymerase III holoenzyme which synthesizes a continuous strand.. It carries out the reaction ATP + H2O = ADP + phosphate + H(+). The enzyme catalyses Couples ATP hydrolysis with the unwinding of duplex DNA by translocating in the 3'-5' direction.. Its activity is regulated as follows. ATPase activity is stimulated in the presence of linear double-stranded (ds)DNA. Helicase activity requires the presence of NurA. LhrC-Core (Hel112) inhibits the exonuclease activity of the HerA-NurA complex on ss- and dsDNA, has no effect on the nicking activity of NurA. Functionally, involved in DNA double-strand break (DSB) repair. Probably acts with NurA to stimulate resection of the 5' strand and produce the long 3' single-strand that is required for RadA loading. NurA and HerA together stimulate the end-resection of six nucleotides of a linear DNA substrate. Has DNA-dependent ATPase activity and bidirectional DNA helicase activity. Preferentially binds single stranded (ss)DNA, bubble and semiforked DNA substrate over other DNA molecules tested. Stimulates the exo- but not endonuclease activity of NurA. The protein is DNA double-strand break repair helicase HerA of Saccharolobus solfataricus (strain ATCC 35092 / DSM 1617 / JCM 11322 / P2) (Sulfolobus solfataricus).